We begin with the raw amino-acid sequence, 527 residues long: MHSTNLLLEEPIRMASILEPSKPSFFPAMTKIVGTLGPKSRAVDTISSCLKAGMSVARFDFSWGDAEYHQETLENLKLAIKSTKKLCAVMLDTVGPELQVVNKSEAAISLEANGTVVLTPDQGQEASSELLPINFSGLAKALKPGATIFVGQYLFTGSETTSVWLEVSEVKGDDVVCVIKNSATLAGSLFTLHCSQIHIDLPTLSDEDKEVIRRWGAPNKIDFLSLSYTRHAEDVRQAREFLSKLGDLSQTQIFAKIENVEGLNHFDEILQEADGIILSRGNLGIDLPPEKVFLFQKSALHKCNMAGKPAVVTRVVDSMTDNLRPTRAEATDVANAVLDGSDAILLGAETLRGLYPVETISIVGKICAEAEKVFNQDLYFKRTVKYVGEPMTHLESIASSAVRAAIKVKASVIICFTSSGRAARLIAKYRPTMPVLSVVIPRLKTNQLRWSFTGAFEARQSLIVRGLFPMLADPRHPAESTSATNESVLKVALDHGKASGVIKSHDRVVVCQKVGDSSVVKIIELDD.

Position 58 (R58) interacts with substrate. K(+) contacts are provided by D60, S62, D92, and T93. 60–63 (DFSW) contacts ATP. K256 provides a ligand contact to substrate. A Mg(2+)-binding site is contributed by E258. Substrate contacts are provided by G281, N282, and T313. Residue N282 participates in Mg(2+) binding.

It belongs to the pyruvate kinase family. As to quaternary structure, homotetramer. Mg(2+) serves as cofactor. It depends on K(+) as a cofactor.

Its subcellular location is the cytoplasm. It localises to the cytosol. The catalysed reaction is pyruvate + ATP = phosphoenolpyruvate + ADP + H(+). Its pathway is carbohydrate degradation; glycolysis; pyruvate from D-glyceraldehyde 3-phosphate: step 5/5. In terms of biological role, key regulatory enzyme of the glycolytic pathway that catalyzes the final step of glycolysis, converting ADP and phosphoenolpyruvate (PEP) to ATP and pyruvate by essentially irreversible transphosphorylation. Is critical for plant growth and development. This Oryza sativa subsp. indica (Rice) protein is Pyruvate kinase 1, cytosolic.